A 65-amino-acid polypeptide reads, in one-letter code: Conopeptide Vt3.2 (65 aa).

Positions 1–12 are cleaved as a signal peptide; sequence LLFPLATLQLNA. A propeptide spanning residues 13-48 is cleaved from the precursor; sequence DQPVERNAENIQDLNPDKRFIFMPVPRRRGPYGSVH. Serine amide is present on Ser-64.

The protein belongs to the conotoxin M superfamily. Homodimer; disulfide-linked. As to expression, expressed by the venom duct.

Its subcellular location is the secreted. The polypeptide is Conopeptide Vt3.2 (Conus planorbis (Planorbis cone)).